The chain runs to 320 residues: MIKKIGVLTSGGDAPGMNAAIRGVVRAALTEGLEVMGIYDGYLGLYEDRMVQLDRYSVSDMINRGGTFLGSARFPEFRDENVRAVAIENLKKRGIDALVVIGGDGSYMGAKRLTEMGFPCIGLPGTIDNDIKGTDYTIGYFTALGTVVEAIDRLRDTSSSHQRISIVEVMGRYCGDLTLAAAIAGGCEFVVVPEVEFSRDDLVAEIKAGIAKGKKHAIVAITEHMCDVDELAHYIEKETGRETRATVLGHIQRGGSPVPYDRILASRMGSYAIELLLEGFGGRCVGIQNEQLVHHDIIDAIENMKRPFKGDWLDCAKKLY.

Gly12 serves as a coordination point for ATP. ADP is bound by residues 22–26 and 55–60; these read RGVVR and RYSVSD. Residues 73 to 74 and 103 to 106 contribute to the ATP site; these read RF and GDGS. Asp104 contributes to the Mg(2+) binding site. 126 to 128 serves as a coordination point for substrate; sequence TID. Asp128 serves as the catalytic Proton acceptor. An ADP-binding site is contributed by Arg155. Substrate-binding positions include Arg163 and 170–172; that span reads MGR. ADP is bound by residues 186–188, Lys212, and 214–216; these read GCE and KKH. Substrate is bound by residues Glu223, Arg244, and 250–253; that span reads HIQR.

The protein belongs to the phosphofructokinase type A (PFKA) family. ATP-dependent PFK group I subfamily. Prokaryotic clade 'B1' sub-subfamily. As to quaternary structure, homotetramer. The cofactor is Mg(2+).

It is found in the cytoplasm. The catalysed reaction is beta-D-fructose 6-phosphate + ATP = beta-D-fructose 1,6-bisphosphate + ADP + H(+). It functions in the pathway carbohydrate degradation; glycolysis; D-glyceraldehyde 3-phosphate and glycerone phosphate from D-glucose: step 3/4. Allosterically activated by ADP and other diphosphonucleosides, and allosterically inhibited by phosphoenolpyruvate. Functionally, catalyzes the phosphorylation of D-fructose 6-phosphate to fructose 1,6-bisphosphate by ATP, the first committing step of glycolysis. The sequence is that of ATP-dependent 6-phosphofructokinase from Citrobacter koseri (strain ATCC BAA-895 / CDC 4225-83 / SGSC4696).